A 142-amino-acid chain; its full sequence is 3-hydroxyacyl-[acyl-carrier-protein] dehydratase FabZ (142 aa).

The active site involves His-47.

It belongs to the thioester dehydratase family. FabZ subfamily.

The protein localises to the cytoplasm. The enzyme catalyses a (3R)-hydroxyacyl-[ACP] = a (2E)-enoyl-[ACP] + H2O. Its function is as follows. Involved in unsaturated fatty acids biosynthesis. Catalyzes the dehydration of short chain beta-hydroxyacyl-ACPs and long chain saturated and unsaturated beta-hydroxyacyl-ACPs. The sequence is that of 3-hydroxyacyl-[acyl-carrier-protein] dehydratase FabZ from Thermoanaerobacter pseudethanolicus (strain ATCC 33223 / 39E) (Clostridium thermohydrosulfuricum).